The sequence spans 457 residues: Adenylosuccinate synthetase isozyme 2 B (457 aa).

GTP contacts are provided by residues 40–46 and 68–70; these read GDEGKGK and GHT. Aspartate 41 serves as the catalytic Proton acceptor. Positions 41 and 68 each coordinate Mg(2+). Aspartate 41 provides a ligand contact to substrate. IMP-binding positions include 41-44, 66-69, threonine 163, arginine 177, asparagine 256, threonine 271, and arginine 335; these read DEGK and NAGH. Histidine 69 acts as the Proton donor in catalysis. Residue 331 to 337 coordinates substrate; it reads VTTGRKR. Residues arginine 337, 363 to 365, and 445 to 448 contribute to the GTP site; these read KLD and GVGK.

Belongs to the adenylosuccinate synthetase family. Homodimer. Requires Mg(2+) as cofactor.

The protein resides in the cytoplasm. It is found in the mitochondrion. It catalyses the reaction IMP + L-aspartate + GTP = N(6)-(1,2-dicarboxyethyl)-AMP + GDP + phosphate + 2 H(+). The protein operates within purine metabolism; AMP biosynthesis via de novo pathway; AMP from IMP: step 1/2. Inhibited competitively by AMP and IMP and non-competitively by fructose 1,6-bisphosphate. Functionally, plays an important role in the de novo pathway and in the salvage pathway of purine nucleotide biosynthesis. Catalyzes the first committed step in the biosynthesis of AMP from IMP. This chain is Adenylosuccinate synthetase isozyme 2 B (adss2-b), found in Xenopus tropicalis (Western clawed frog).